The primary structure comprises 99 residues: Nucleoid-associated protein EbfC (99 aa).

It belongs to the YbaB/EbfC family. In terms of assembly, homodimer.

It localises to the cytoplasm. Its subcellular location is the nucleoid. Its function is as follows. Binds to DNA and alters its conformation. May be involved in regulation of gene expression, nucleoid organization and DNA protection. This Borrelia hermsii (strain HS1 / DAH) protein is Nucleoid-associated protein EbfC.